Consider the following 84-residue polypeptide: M-zodatoxin-Lt2a (84 aa).

Positions 1–22 are cleaved as a signal peptide; the sequence is MKYFVIALALAVALVCIAESTA. Positions 23–58 are excised as a propeptide; it reads YEVNEELENELDDLDDAAWLAVAEELQGLEDFEESR. Residues 55–58 carry the Processing quadruplet motif motif; it reads EESR.

Post-translationally, cleavage of the propeptide depends on the processing quadruplet motif (XXXR, with at least one of X being E). In terms of tissue distribution, expressed by the venom gland.

The protein localises to the secreted. Its function is as follows. It has antimicrobial activity against Gram-positive bacteria (A.globiformis VKM Ac-1112 (MIC=0.7 uM), and B.subtilis VKM B-501 (MIC=0.4 uM)), Gram-negative bacteria (E.coli DH5-alpha (MIC=1.0 uM), E.coli MH1 (MIC=0.7 uM), and P.aeruginosa PAO1 (MIC=6.7 uM)), and yeasts (P.pastoris GS115 (MIC=6.7 uM), and S.cerevisiae Y190 (MIC=54 uM)). Also has a strong hemolytic activity against rabbit erythrocytes. Causes paralysis, but is not lethal when injected into insect (M.domestica) larvae. This Lachesana tarabaevi (Spider) protein is M-zodatoxin-Lt2a.